Reading from the N-terminus, the 77-residue chain is U-actitoxin-Avd12a (77 aa).

Positions 1 to 23 are cleaved as a signal peptide; it reads MALFRMLFLCAVLVLLTSKEGMS. A propeptide spanning residues 24-29 is cleaved from the precursor; it reads YEEPEN. Residues 31–73 enclose the EGF-like domain; the sequence is EGVACTGQYAESFCLNGGTCRYIQSIGEYYCICNGDYTGHRCE. Cystine bridges form between Cys-35-Cys-50, Cys-44-Cys-61, and Cys-63-Cys-72.

It belongs to the EGF domain peptide family.

It localises to the secreted. It is found in the nematocyst. Functionally, has both toxic and EGF activity. Its EGF activity consists of rounding cells (morphological change) and inducing tyrosine phosphorylation of the EGFR in A431 cells, but with a lower potency that human EGF. In Anemonia viridis (Snakelocks anemone), this protein is U-actitoxin-Avd12a.